We begin with the raw amino-acid sequence, 61 residues long: MARKGLVERWKKPKKFKTREYTRCKICGRAHSVYREFGICRVCFRKMANEGKLPGVRKATW.

4 residues coordinate Zn(2+): Cys24, Cys27, Cys40, and Cys43.

The protein belongs to the universal ribosomal protein uS14 family. Zinc-binding uS14 subfamily. Part of the 30S ribosomal subunit. Contacts proteins S3 and S10. It depends on Zn(2+) as a cofactor.

Functionally, binds 16S rRNA, required for the assembly of 30S particles and may also be responsible for determining the conformation of the 16S rRNA at the A site. This chain is Small ribosomal subunit protein uS14, found in Thermosipho africanus (strain TCF52B).